A 1079-amino-acid polypeptide reads, in one-letter code: Carbamoyl phosphate synthase large chain (1079 aa).

Positions 2 to 403 are carboxyphosphate synthetic domain; that stretch reads PKSTDIKSIL…SIQKAIRGLE (402 aa). Residues Arg-129, Arg-169, Gly-175, Gly-176, Glu-208, Leu-210, Glu-215, Gly-241, Ile-242, His-243, Gln-285, and Glu-299 each coordinate ATP. Positions 133 to 328 constitute an ATP-grasp 1 domain; the sequence is EHSMKKLNLE…IAKIAAKLAI (196 aa). Gln-285, Glu-299, and Asn-301 together coordinate Mg(2+). Residues Gln-285, Glu-299, and Asn-301 each coordinate Mn(2+). Positions 404-553 are oligomerization domain; that stretch reads VGASGFDSKI…YSTWEDECES (150 aa). Positions 554-936 are carbamoyl phosphate synthetic domain; that stretch reads HPSKNNKKII…AFSKSMLGAH (383 aa). An ATP-grasp 2 domain is found at 679-870; that stretch reads QKTVNKLRLQ…LAKISVRVMC (192 aa). The ATP site is built by Arg-715, Gln-754, Leu-756, Glu-761, Gly-786, Val-787, His-788, Ser-789, Gln-829, and Glu-841. Residues Gln-829, Glu-841, and Asn-843 each contribute to the Mg(2+) site. The Mn(2+) site is built by Gln-829, Glu-841, and Asn-843. The MGS-like domain occupies 937 to 1079; that stretch reads TNMKKSGRVL…KKIQLFYTKK (143 aa). Positions 937–1079 are allosteric domain; the sequence is TNMKKSGRVL…KKIQLFYTKK (143 aa).

Belongs to the CarB family. As to quaternary structure, composed of two chains; the small (or glutamine) chain promotes the hydrolysis of glutamine to ammonia, which is used by the large (or ammonia) chain to synthesize carbamoyl phosphate. Tetramer of heterodimers (alpha,beta)4. It depends on Mg(2+) as a cofactor. The cofactor is Mn(2+).

It catalyses the reaction hydrogencarbonate + L-glutamine + 2 ATP + H2O = carbamoyl phosphate + L-glutamate + 2 ADP + phosphate + 2 H(+). The enzyme catalyses hydrogencarbonate + NH4(+) + 2 ATP = carbamoyl phosphate + 2 ADP + phosphate + 2 H(+). Its pathway is amino-acid biosynthesis; L-arginine biosynthesis; carbamoyl phosphate from bicarbonate: step 1/1. It participates in pyrimidine metabolism; UMP biosynthesis via de novo pathway; (S)-dihydroorotate from bicarbonate: step 1/3. Functionally, large subunit of the glutamine-dependent carbamoyl phosphate synthetase (CPSase). CPSase catalyzes the formation of carbamoyl phosphate from the ammonia moiety of glutamine, carbonate, and phosphate donated by ATP, constituting the first step of 2 biosynthetic pathways, one leading to arginine and/or urea and the other to pyrimidine nucleotides. The large subunit (synthetase) binds the substrates ammonia (free or transferred from glutamine from the small subunit), hydrogencarbonate and ATP and carries out an ATP-coupled ligase reaction, activating hydrogencarbonate by forming carboxy phosphate which reacts with ammonia to form carbamoyl phosphate. This chain is Carbamoyl phosphate synthase large chain, found in Buchnera aphidicola subsp. Acyrthosiphon pisum (strain APS) (Acyrthosiphon pisum symbiotic bacterium).